Consider the following 598-residue polypeptide: Elongation factor 4 (598 aa).

One can recognise a tr-type G domain in the interval 2–184; sequence NRIRNFSIIA…TIVAKLPPPK (183 aa). GTP is bound by residues 14-19 and 131-134; these read DHGKST and NKID.

This sequence belongs to the TRAFAC class translation factor GTPase superfamily. Classic translation factor GTPase family. LepA subfamily.

The protein localises to the cell inner membrane. The enzyme catalyses GTP + H2O = GDP + phosphate + H(+). In terms of biological role, required for accurate and efficient protein synthesis under certain stress conditions. May act as a fidelity factor of the translation reaction, by catalyzing a one-codon backward translocation of tRNAs on improperly translocated ribosomes. Back-translocation proceeds from a post-translocation (POST) complex to a pre-translocation (PRE) complex, thus giving elongation factor G a second chance to translocate the tRNAs correctly. Binds to ribosomes in a GTP-dependent manner. This is Elongation factor 4 from Desulfosudis oleivorans (strain DSM 6200 / JCM 39069 / Hxd3) (Desulfococcus oleovorans).